Here is a 327-residue protein sequence, read N- to C-terminus: Phenylalanine--tRNA ligase alpha subunit (327 aa).

Glu-252 is a binding site for Mg(2+).

It belongs to the class-II aminoacyl-tRNA synthetase family. Phe-tRNA synthetase alpha subunit type 1 subfamily. Tetramer of two alpha and two beta subunits. The cofactor is Mg(2+).

The protein localises to the cytoplasm. The catalysed reaction is tRNA(Phe) + L-phenylalanine + ATP = L-phenylalanyl-tRNA(Phe) + AMP + diphosphate + H(+). This Vibrio parahaemolyticus serotype O3:K6 (strain RIMD 2210633) protein is Phenylalanine--tRNA ligase alpha subunit.